A 263-amino-acid chain; its full sequence is Polyglutamine-binding protein 1 (263 aa).

The 35-residue stretch at 46-80 (EGLPPSWYKVFDPSCGLPYYWNVETDLVSWLSPHD) folds into the WW domain. The tract at residues 94-263 (NNNADAEDKS…AEASRTKQQD (170 aa)) is disordered. The span at 99–173 (AEDKSDRNLE…DKADREEGKD (75 aa)) shows a compositional bias: basic and acidic residues. One copy of the 1-1; approximate repeat lies at 104-110 (DRNLEKV). A 5 X 7 AA approximate tandem repeats of D-R-[NS]-H-E-K-S region spans residues 104 to 138 (DRNLEKVDRNHEKSDRSHEKPDRSHEKADRNHEKN). The 1-2 repeat unit spans residues 111 to 117 (DRNHEKS). One copy of the 1-3; approximate repeat lies at 118-124 (DRSHEKP). The 1-4; approximate repeat unit spans residues 125-131 (DRSHEKA). One copy of the 1-5; approximate repeat lies at 132-138 (DRNHEKN). 9 tandem repeats follow at residues 139–140 (DR), 141–142 (ER), 143–144 (ER), 150–151 (DR), 152–153 (ER), 154–155 (DR), 156–157 (DR), 158–159 (ER), and 160–161 (ER). The interval 139 to 144 (DRERER) is 3 X 2 AA tandem repeats of [DE]-R. The interval 150 to 161 (DRERDRDRERER) is 6 X 2 AA tandem repeats of [DE]-R. An important for interaction with TXNL4A region spans residues 243-253 (YPSPGAVLRAN). Serine 245 is modified (phosphoserine).

Interacts with POU3F2/Brn-2, ATXN1, TXNL4A, HTT and AR. Interaction with ATXN1 correlates positively with the length of the polyglutamine tract. Interacts with RNA polymerase II large subunit in a phosphorylation-dependent manner. Forms a ternary complex with ATXN1 mutant and phosphorylated RNA polymerase II. Interacts (via C-terminus) with TXNL4A and CD2BP2. Interacts (via WW domain) with ATN1 and SF3B1, and may interact with additional splice factors. Interacts (via WW domain) with WBP11; Leading to reduce interaction between PQBP1 and TXNL4A. Interacts with CAPRIN1. Interacts with DDX1. Interacts with SFPQ. Interacts with KHSRP. Detected in brain cortex and hippocampus neurons (at protein level). Expressed in brain with high level in cerebellar cortex, hippocampus and olfactory bulb.

It is found in the nucleus. It localises to the nucleus speckle. Its subcellular location is the cytoplasmic granule. Intrinsically disordered protein that acts as a scaffold, and which is involved in different processes, such as pre-mRNA splicing, transcription regulation, innate immunity and neuron development. Interacts with splicing-related factors via the intrinsically disordered region and regulates alternative splicing of target pre-mRNA species. May suppress the ability of POU3F2 to transactivate the DRD1 gene in a POU3F2 dependent manner. Can activate transcription directly or via association with the transcription machinery. May be involved in ATXN1 mutant-induced cell death. The interaction with ATXN1 mutant reduces levels of phosphorylated RNA polymerase II large subunit. Involved in the assembly of cytoplasmic stress granule, possibly by participating in the transport of neuronal RNA granules. Also acts as an innate immune sensor of infection by retroviruses, by detecting the presence of reverse-transcribed DNA in the cytosol. Directly binds retroviral reverse-transcribed DNA in the cytosol and interacts with CGAS, leading to activate the cGAS-STING signaling pathway, triggering type-I interferon production. The polypeptide is Polyglutamine-binding protein 1 (Pqbp1) (Mus musculus (Mouse)).